A 451-amino-acid chain; its full sequence is Protein naked cuticle homolog 2 (451 aa).

Residues 1 to 108 (MGKLQSKHAA…PRGPGGQRLN (108 aa)) form a disordered region. Gly-2 is lipidated: N-myristoyl glycine. The segment at 2 to 173 (GKLQSKHAAA…GSSKTLRVKL (172 aa)) is targeting to the basolateral cell membrane. 2 stretches are compositionally biased toward basic and acidic residues: residues 34–63 (KGAE…REDQ) and 89–99 (DGERAANREGP). Positions 113–178 (QCDVSVEEDD…LRVKLTVSPE (66 aa)) are interaction with DVL1, DVL2 and DVL3. Residues 119–154 (EEDDRQEWTFTLYDFDNCGKVTREDMSSLMHTIYEV) enclose the EF-hand domain. Residues Asp-132, Asp-134, Lys-138, and Asp-143 each contribute to the Ca(2+) site. 2 disordered regions span residues 162-237 (SSGS…PYCV) and 256-408 (YTSR…TVEH). A compositionally biased stretch (basic and acidic residues) spans 180-215 (SSKRKEGPPAGQDREPTRCRMEGELAEEPRVADRRL). The segment at 300–385 (QVLVEHVVPA…PPPPYGHKRY (86 aa)) is interaction with TGFA. A compositionally biased stretch (low complexity) spans 332–351 (KSPKGSGKPPGVPASSKSGK).

It belongs to the NKD family. As to quaternary structure, interacts with DVL1, DVL2, DVL3 and PPP2R3A. Interacts with RNF25 and TGFA (via cytoplasmic domain). In terms of processing, ubiquitinated, leading to rapid proteasomal degradation. Interaction with TGFA interferes with RNF25 binding and protects against ubiquitination mediated by RNF25. Expressed in kidney, lung, pancreas and spleen.

The protein resides in the cell membrane. It localises to the cytoplasm. It is found in the cytoplasmic vesicle. Its function is as follows. Cell autonomous antagonist of the canonical Wnt signaling pathway. May activate a second Wnt signaling pathway that controls planar cell polarity. Required for processing of TGFA and for targeting of TGFA to the basolateral membrane of polarized epithelial cells. The chain is Protein naked cuticle homolog 2 (NKD2) from Homo sapiens (Human).